Here is a 408-residue protein sequence, read N- to C-terminus: Cell division protein FtsZ 2 (408 aa).

Residues 130–132, E169, R173, and D216 contribute to the GTP site; that span reads GTG.

It belongs to the FtsZ family. As to quaternary structure, homodimer. Polymerizes to form a dynamic ring structure in a strictly GTP-dependent manner. Interacts directly with several other division proteins.

It localises to the cytoplasm. Essential cell division protein that forms a contractile ring structure (Z ring) at the future cell division site. The regulation of the ring assembly controls the timing and the location of cell division. One of the functions of the FtsZ ring is to recruit other cell division proteins to the septum to produce a new cell wall between the dividing cells. Binds GTP and shows GTPase activity. The sequence is that of Cell division protein FtsZ 2 from Pyrococcus furiosus (strain ATCC 43587 / DSM 3638 / JCM 8422 / Vc1).